We begin with the raw amino-acid sequence, 757 residues long: uncharacterized protein (757 aa).

The 70-residue stretch at 640-709 folds into the S1 motif domain; the sequence is GMILEGVVSN…ARKRIALTMR (70 aa). Residues 710-741 show a composition bias toward basic and acidic residues; it reads LDDEPGGAKHKMPSENRSRERTAGRKPQRNDR. Residues 710–757 form a disordered region; the sequence is LDDEPGGAKHKMPSENRSRERTAGRKPQRNDRAPANSAMADAFAKLKR.

This is an uncharacterized protein from Neisseria meningitidis serogroup A / serotype 4A (strain DSM 15465 / Z2491).